Reading from the N-terminus, the 287-residue chain is 4-hydroxybenzoate octaprenyltransferase (287 aa).

A run of 8 helical transmembrane segments spans residues 19–39 (IGSL…ADGL), 42–62 (WHVL…GCVI), 95–115 (FFAV…TLTI), 136–156 (YLPQ…AYAA), 166–186 (WLLF…YAMV), 210–230 (IIGL…SQLA), 233–253 (GIYY…QWLI), and 264–284 (AFLN…ASVL).

This sequence belongs to the UbiA prenyltransferase family. Mg(2+) serves as cofactor.

The protein resides in the cell inner membrane. The enzyme catalyses all-trans-octaprenyl diphosphate + 4-hydroxybenzoate = 4-hydroxy-3-(all-trans-octaprenyl)benzoate + diphosphate. The protein operates within cofactor biosynthesis; ubiquinone biosynthesis. In terms of biological role, catalyzes the prenylation of para-hydroxybenzoate (PHB) with an all-trans polyprenyl group. Mediates the second step in the final reaction sequence of ubiquinone-8 (UQ-8) biosynthesis, which is the condensation of the polyisoprenoid side chain with PHB, generating the first membrane-bound Q intermediate 3-octaprenyl-4-hydroxybenzoate. This Aliivibrio fischeri (strain MJ11) (Vibrio fischeri) protein is 4-hydroxybenzoate octaprenyltransferase.